The sequence spans 1209 residues: ATP-dependent helicase/nuclease subunit A (1209 aa).

Residues 9–482 (SQWTDEQWQA…IDLAKNFRSR (474 aa)) form the UvrD-like helicase ATP-binding domain. An ATP-binding site is contributed by 30-37 (AAAGSGKT). In terms of domain architecture, UvrD-like helicase C-terminal spans 510-798 (AALRFGAQDY…RMMTIHKSKG (289 aa)).

This sequence belongs to the helicase family. AddA subfamily. In terms of assembly, heterodimer of AddA and AddB/RexB. Mg(2+) is required as a cofactor.

The catalysed reaction is Couples ATP hydrolysis with the unwinding of duplex DNA by translocating in the 3'-5' direction.. The enzyme catalyses ATP + H2O = ADP + phosphate + H(+). In terms of biological role, the heterodimer acts as both an ATP-dependent DNA helicase and an ATP-dependent, dual-direction single-stranded exonuclease. Recognizes the chi site generating a DNA molecule suitable for the initiation of homologous recombination. The AddA nuclease domain is required for chi fragment generation; this subunit has the helicase and 3' -&gt; 5' nuclease activities. The chain is ATP-dependent helicase/nuclease subunit A from Anoxybacillus flavithermus (strain DSM 21510 / WK1).